Here is a 557-residue protein sequence, read N- to C-terminus: Eudesmanediol synthase (557 aa).

Mg(2+) is bound by residues Asp-310 and Asp-314. Residues Asp-310, Asp-314, Arg-450, and Asn-453 each coordinate substrate. Positions 310–314 (DDTFD) match the DDXXD motif motif. Mg(2+) is bound by residues Asn-453 and Ser-457.

Belongs to the terpene synthase family. As to quaternary structure, monomer. The cofactor is Mg(2+). Mn(2+) serves as cofactor. Specifically expressed in roots.

It is found in the cytoplasm. It catalyses the reaction (2E,6E)-farnesyl diphosphate + 2 H2O = 7-epi-ent-eudesmane-5,11-diol + diphosphate. It participates in secondary metabolite biosynthesis; terpenoid biosynthesis. Its function is as follows. Component of the volatile terpenes biosynthesis pathways. Dihydroxylated sesquiterpenoid synthase that generates dually hydroxylated products directly from (E,E)-farnesyl diphosphate, primarily eudesmane-2,11-diol, along with two closely related structural isomers. The polypeptide is Eudesmanediol synthase (Zea mays (Maize)).